Reading from the N-terminus, the 314-residue chain is Tyrosine recombinase XerC (314 aa).

The Core-binding (CB) domain occupies 1–85 (MNEQVEAFLR…AVKSFFTFLT (85 aa)). The region spanning 106–291 (DLPRALTPRQ…NHESSHTPHA (186 aa)) is the Tyr recombinase domain. Catalysis depends on residues Arg147, Lys171, His243, Arg246, and His269. Tyr278 acts as the O-(3'-phospho-DNA)-tyrosine intermediate in catalysis. The tract at residues 284–314 (ESSHTPHAHPAPRASEVNGVRDEQALVPEEK) is disordered. A compositionally biased stretch (basic and acidic residues) spans 302–314 (GVRDEQALVPEEK).

It belongs to the 'phage' integrase family. XerC subfamily. In terms of assembly, forms a cyclic heterotetrameric complex composed of two molecules of XerC and two molecules of XerD.

The protein localises to the cytoplasm. Its function is as follows. Site-specific tyrosine recombinase, which acts by catalyzing the cutting and rejoining of the recombining DNA molecules. The XerC-XerD complex is essential to convert dimers of the bacterial chromosome into monomers to permit their segregation at cell division. It also contributes to the segregational stability of plasmids. This Roseiflexus castenholzii (strain DSM 13941 / HLO8) protein is Tyrosine recombinase XerC.